We begin with the raw amino-acid sequence, 323 residues long: Transmembrane protein 171 (323 aa).

The next 4 helical transmembrane spans lie at Ile-22–Phe-42, Met-57–Ala-77, Leu-112–Val-132, and Phe-159–Val-179. The segment covering Tyr-251–Ala-268 has biased composition (polar residues). The segment at Tyr-251–Pro-323 is disordered. Positions Ser-281–Ser-290 are enriched in low complexity.

The protein localises to the membrane. This chain is Transmembrane protein 171 (Tmem171), found in Rattus norvegicus (Rat).